The primary structure comprises 331 residues: CRISPR-associated endonuclease Cas1 (331 aa).

Mn(2+)-binding residues include Glu155, His221, and Glu236.

The protein belongs to the CRISPR-associated endonuclease Cas1 family. In terms of assembly, homodimer, forms a heterotetramer with a Cas2 homodimer. Mg(2+) is required as a cofactor. It depends on Mn(2+) as a cofactor.

Functionally, CRISPR (clustered regularly interspaced short palindromic repeat), is an adaptive immune system that provides protection against mobile genetic elements (viruses, transposable elements and conjugative plasmids). CRISPR clusters contain spacers, sequences complementary to antecedent mobile elements, and target invading nucleic acids. CRISPR clusters are transcribed and processed into CRISPR RNA (crRNA). Acts as a dsDNA endonuclease. Involved in the integration of spacer DNA into the CRISPR cassette. This Methanopyrus kandleri (strain AV19 / DSM 6324 / JCM 9639 / NBRC 100938) protein is CRISPR-associated endonuclease Cas1.